The chain runs to 515 residues: Endoglucanase 2 (515 aa).

The first 31 residues, 1 to 31 (MVAKPRSRCCCCSVFIGVIILIAIIIAVIFT), serve as a signal peptide directing secretion. Asn-37 is a glycosylation site (N-linked (GlcNAc...) asparagine). Catalysis depends on Asp-100, which acts as the Nucleophile. Residue Asn-250 is glycosylated (N-linked (GlcNAc...) asparagine). The active site involves His-433. Asn-475 carries N-linked (GlcNAc...) asparagine glycosylation. The active site involves Asp-480. Asn-483 is a glycosylation site (N-linked (GlcNAc...) asparagine). Glu-489 is a catalytic residue.

Belongs to the glycosyl hydrolase 9 (cellulase E) family.

It localises to the secreted. The catalysed reaction is Endohydrolysis of (1-&gt;4)-beta-D-glucosidic linkages in cellulose, lichenin and cereal beta-D-glucans.. The chain is Endoglucanase 2 from Arabidopsis thaliana (Mouse-ear cress).